A 608-amino-acid polypeptide reads, in one-letter code: Ceramide kinase (608 aa).

The region spanning 160–367 (ERPRNLLVFV…LDAMQVVRWK (208 aa)) is the DAGKc domain. ATP-binding positions include 170–174 (HPKSG), Thr201, and 230–236 (GDGFFNE). 229–232 (GGDG) serves as a coordination point for substrate. Asp231 acts as the Proton donor/acceptor in catalysis. The segment at 254 to 280 (PSDSFNSVQSRGSSSVPEPGDEVHETD) is disordered. Residues 255 to 269 (SDSFNSVQSRGSSSV) show a composition bias toward polar residues. Ser329 is an ATP binding site.

It depends on Ca(2+) as a cofactor.

It catalyses the reaction an N-acylsphing-4-enine + ATP = an N-acylsphing-4-enine 1-phosphate + ADP + H(+). In terms of biological role, catalyzes specifically the phosphorylation of ceramide to form ceramide 1-phosphate. Possesses high activity on ceramide analogs (C6, C8 synthetic ceramides) and lower activity on C6 and C8 dihydroceramides. Has weak activity on natural ceramides (a mixture of ceramides from bovine brain) and the synthetic substrate C2 ceramide. Has very poor activity on diacylglycerol and sphingosine. Ceramide is a critical sphingolipid metabolite that induces programmed cell death (PCD) in plants and ceramide-1-phosphate has a PCD suppressive effect. Thus, ceramide phosphorylation plays a role in the modulation of PCD and CERK activity is crucial for the maintenance of cell viability. The protein is Ceramide kinase (CERK) of Arabidopsis thaliana (Mouse-ear cress).